The sequence spans 175 residues: Ribosome maturation factor RimM (175 aa).

Residues 96–172 form the PRC barrel domain; it reads PDTYYDHQLE…LIEIDPPDGL (77 aa).

It belongs to the RimM family. Binds ribosomal protein uS19.

The protein localises to the cytoplasm. Functionally, an accessory protein needed during the final step in the assembly of 30S ribosomal subunit, possibly for assembly of the head region. Essential for efficient processing of 16S rRNA. May be needed both before and after RbfA during the maturation of 16S rRNA. It has affinity for free ribosomal 30S subunits but not for 70S ribosomes. This Mycobacterium avium (strain 104) protein is Ribosome maturation factor RimM.